A 341-amino-acid polypeptide reads, in one-letter code: NADH-quinone oxidoreductase subunit H 2 (341 aa).

8 consecutive transmembrane segments (helical) span residues 13-33, 82-102, 115-135, 161-181, 190-210, 248-268, 277-297, and 317-337; these read IIVIGQSVLLLVLLLISIAYI, GVFLLAPLVTCVLALAAWAVI, VGVLYILAVSSLSVYGIIMAG, IGFVVICVLLCVGSLNLTAIV, MLGWYWLPLFPMFVVFYVSAL, YVAIVTMCAMGTILFLGGWLP, WVPGIVWFALKVLFMFFLFAM, and VFLPLSLAMVVIVAAVLQFAG.

This sequence belongs to the complex I subunit 1 family. NDH-1 is composed of 14 different subunits. Subunits NuoA, H, J, K, L, M, N constitute the membrane sector of the complex.

The protein localises to the cell inner membrane. The catalysed reaction is a quinone + NADH + 5 H(+)(in) = a quinol + NAD(+) + 4 H(+)(out). In terms of biological role, NDH-1 shuttles electrons from NADH, via FMN and iron-sulfur (Fe-S) centers, to quinones in the respiratory chain. The immediate electron acceptor for the enzyme in this species is believed to be ubiquinone. Couples the redox reaction to proton translocation (for every two electrons transferred, four hydrogen ions are translocated across the cytoplasmic membrane), and thus conserves the redox energy in a proton gradient. This subunit may bind ubiquinone. The protein is NADH-quinone oxidoreductase subunit H 2 of Rhodopseudomonas palustris (strain BisB5).